The sequence spans 490 residues: N-succinylglutamate 5-semialdehyde dehydrogenase (490 aa).

Residue 223–228 (GSSRTG) coordinates NAD(+). Residues Glu-246 and Cys-280 contribute to the active site.

Belongs to the aldehyde dehydrogenase family. AstD subfamily.

It catalyses the reaction N-succinyl-L-glutamate 5-semialdehyde + NAD(+) + H2O = N-succinyl-L-glutamate + NADH + 2 H(+). The protein operates within amino-acid degradation; L-arginine degradation via AST pathway; L-glutamate and succinate from L-arginine: step 4/5. Its function is as follows. Catalyzes the NAD-dependent reduction of succinylglutamate semialdehyde into succinylglutamate. The polypeptide is N-succinylglutamate 5-semialdehyde dehydrogenase (Pseudoalteromonas atlantica (strain T6c / ATCC BAA-1087)).